The primary structure comprises 2210 residues: Genome polyprotein (2210 aa).

The interval M1 to P22 is disordered. The 160-residue stretch at S426–V585 folds into the SF3 helicase domain. G456–S463 serves as a coordination point for ATP. An O-(5'-phospho-RNA)-tyrosine modification is found at Y940. A Peptidase C24 domain is found at G991 to P1136. Residues H1025, D1039, and C1103 each act as for 3CLpro activity in the active site. The 123-residue stretch at D1379–I1501 folds into the RdRp catalytic domain. The segment at S1654–A1686 is disordered.

In terms of processing, specific enzymatic cleavages by its own cysteine protease yield mature proteins. The protease cleaves itself from the nascent polyprotein autocatalytically. Precursor p41 can be cleaved by viral 3CLpro into protein p19 and VPg, or cleaved by host protease into protein p23/2 and protein p18. Post-translationally, VPg is uridylylated by the polymerase and is covalently attached to the 5'-end of the polyadenylated genomic and subgenomic RNAs. This uridylylated form acts as a nucleotide-peptide primer for the polymerase.

It localises to the virion. The protein localises to the host cytoplasm. The catalysed reaction is a ribonucleoside 5'-triphosphate + H2O = a ribonucleoside 5'-diphosphate + phosphate + H(+). It catalyses the reaction Endopeptidase with a preference for cleavage when the P1 position is occupied by Glu-|-Xaa and the P1' position is occupied by Gly-|-Yaa.. The enzyme catalyses RNA(n) + a ribonucleoside 5'-triphosphate = RNA(n+1) + diphosphate. Displays NTPase activity, but no helicase activity. Induces the formation of convoluted membranes derived from the host ER. These remodeled membranes probably form the viral factories that contain the replication complex. Together with NS2 and NS4, initiates the formation of the replication complex. In terms of biological role, viral genome-linked protein is covalently linked to the 5'-end of the positive-strand, negative-strand genomic RNAs and subgenomic RNA. Acts as a genome-linked replication primer. May recruit ribosome to viral RNA thereby promoting viral proteins translation. Interacts with host translation initiation complex to allow the translation of viral proteins. Its function is as follows. Processes the polyprotein. 3CLpro-RdRp is first released by autocleavage, then all other proteins are cleaved. May cleave polyadenylate-binding protein thereby inhibiting cellular translation. Functionally, replicates genomic and antigenomic RNA by recognizing replications specific signals. Also transcribes a subgenomic mRNA by initiating RNA synthesis internally on antigenomic RNA. This sgRNA codes for structural proteins. Catalyzes the covalent attachment VPg with viral RNAs. Capsid protein self assembles to form an icosahedral capsid with a T=3 symmetry, about 35 nm in diameter, and consisting of 180 capsid proteins. A smaller form of capsid with a diameter of 23 nm might be capsid proteins assembled as icosahedron with T=1 symmetry. The capsid encapsulate VP2 proteins and genomic or subgenomic RNA. Attaches virion to target cells by binding histo-blood group antigens, inducing endocytosis of the viral particle. Acidification of the endosome induces conformational change of capsid protein thereby injecting virus genomic RNA into host cytoplasm. This chain is Genome polyprotein, found in Bos taurus (Bovine).